We begin with the raw amino-acid sequence, 940 residues long: Isoleucine--tRNA ligase (940 aa).

Residues 59–69 carry the 'HIGH' region motif; the sequence is PYANGDIHIGH. E563 is a binding site for L-isoleucyl-5'-AMP. Positions 604 to 608 match the 'KMSKS' region motif; that stretch reads KMSKS. K607 serves as a coordination point for ATP. Zn(2+)-binding residues include C903, C906, C923, and C926.

The protein belongs to the class-I aminoacyl-tRNA synthetase family. IleS type 1 subfamily. Monomer. It depends on Zn(2+) as a cofactor.

Its subcellular location is the cytoplasm. The catalysed reaction is tRNA(Ile) + L-isoleucine + ATP = L-isoleucyl-tRNA(Ile) + AMP + diphosphate. Functionally, catalyzes the attachment of isoleucine to tRNA(Ile). As IleRS can inadvertently accommodate and process structurally similar amino acids such as valine, to avoid such errors it has two additional distinct tRNA(Ile)-dependent editing activities. One activity is designated as 'pretransfer' editing and involves the hydrolysis of activated Val-AMP. The other activity is designated 'posttransfer' editing and involves deacylation of mischarged Val-tRNA(Ile). The polypeptide is Isoleucine--tRNA ligase (Wigglesworthia glossinidia brevipalpis).